The primary structure comprises 394 residues: Elongation factor Tu 1 (394 aa).

Residues Lys-10–Glu-204 enclose the tr-type G domain. The segment at Gly-19–Thr-26 is G1. Residue Gly-19–Thr-26 coordinates GTP. A Mg(2+)-binding site is contributed by Thr-26. The G2 stretch occupies residues Gly-60–Ser-64. The tract at residues Asp-81–Gly-84 is G3. Residues Asp-81 to His-85 and Asn-136 to Asp-139 each bind GTP. The G4 stretch occupies residues Asn-136–Asp-139. Residues Ser-174 to Leu-176 are G5.

This sequence belongs to the TRAFAC class translation factor GTPase superfamily. Classic translation factor GTPase family. EF-Tu/EF-1A subfamily. As to quaternary structure, monomer.

It localises to the cytoplasm. It carries out the reaction GTP + H2O = GDP + phosphate + H(+). Functionally, GTP hydrolase that promotes the GTP-dependent binding of aminoacyl-tRNA to the A-site of ribosomes during protein biosynthesis. This is Elongation factor Tu 1 from Photorhabdus laumondii subsp. laumondii (strain DSM 15139 / CIP 105565 / TT01) (Photorhabdus luminescens subsp. laumondii).